The chain runs to 201 residues: Probable GTP-binding protein EngB (201 aa).

In terms of domain architecture, EngB-type G spans T22–V195. GTP-binding positions include G30–S37, G57–T61, D75–G78, T142–D145, and F174–S176. S37 and T59 together coordinate Mg(2+).

This sequence belongs to the TRAFAC class TrmE-Era-EngA-EngB-Septin-like GTPase superfamily. EngB GTPase family. Mg(2+) serves as cofactor.

Functionally, necessary for normal cell division and for the maintenance of normal septation. The chain is Probable GTP-binding protein EngB from Lachnoclostridium phytofermentans (strain ATCC 700394 / DSM 18823 / ISDg) (Clostridium phytofermentans).